We begin with the raw amino-acid sequence, 503 residues long: Probable cytosol aminopeptidase (503 aa).

Mn(2+) contacts are provided by Lys-274 and Asp-279. Lys-286 is an active-site residue. Residues Asp-297, Asp-356, and Glu-358 each coordinate Mn(2+). Arg-360 is a catalytic residue.

Belongs to the peptidase M17 family. Mn(2+) is required as a cofactor.

The protein localises to the cytoplasm. It catalyses the reaction Release of an N-terminal amino acid, Xaa-|-Yaa-, in which Xaa is preferably Leu, but may be other amino acids including Pro although not Arg or Lys, and Yaa may be Pro. Amino acid amides and methyl esters are also readily hydrolyzed, but rates on arylamides are exceedingly low.. It carries out the reaction Release of an N-terminal amino acid, preferentially leucine, but not glutamic or aspartic acids.. Functionally, presumably involved in the processing and regular turnover of intracellular proteins. Catalyzes the removal of unsubstituted N-terminal amino acids from various peptides. This is Probable cytosol aminopeptidase from Burkholderia cenocepacia (strain ATCC BAA-245 / DSM 16553 / LMG 16656 / NCTC 13227 / J2315 / CF5610) (Burkholderia cepacia (strain J2315)).